The chain runs to 455 residues: UDP-N-acetylmuramoylalanine--D-glutamate ligase (455 aa).

118 to 124 (GSNAKST) provides a ligand contact to ATP.

The protein belongs to the MurCDEF family.

The protein localises to the cytoplasm. The catalysed reaction is UDP-N-acetyl-alpha-D-muramoyl-L-alanine + D-glutamate + ATP = UDP-N-acetyl-alpha-D-muramoyl-L-alanyl-D-glutamate + ADP + phosphate + H(+). It functions in the pathway cell wall biogenesis; peptidoglycan biosynthesis. Its function is as follows. Cell wall formation. Catalyzes the addition of glutamate to the nucleotide precursor UDP-N-acetylmuramoyl-L-alanine (UMA). The sequence is that of UDP-N-acetylmuramoylalanine--D-glutamate ligase from Chromohalobacter salexigens (strain ATCC BAA-138 / DSM 3043 / CIP 106854 / NCIMB 13768 / 1H11).